We begin with the raw amino-acid sequence, 35 residues long: 30 kDa neutral phosphatase (35 aa).

Residues 1-28 (KSSAEVQQTQQASIPASQKANLGNQNNI) show a composition bias toward polar residues. The interval 1–35 (KSSAEVQQTQQASIPASQKANLGNQNNIMXVAXYQ) is disordered.

Functionally, highly cationic enzyme that can bind human or rat immunoglobulins as well as serum albumin, and could therefore be involved in post-infectious sequelae. The sequence is that of 30 kDa neutral phosphatase from Staphylococcus aureus.